The chain runs to 184 residues: Peptide deformylase (184 aa).

Fe cation-binding residues include Cys99 and His141. Glu142 is a catalytic residue. His145 is a binding site for Fe cation.

This sequence belongs to the polypeptide deformylase family. It depends on Fe(2+) as a cofactor.

It carries out the reaction N-terminal N-formyl-L-methionyl-[peptide] + H2O = N-terminal L-methionyl-[peptide] + formate. Removes the formyl group from the N-terminal Met of newly synthesized proteins. Requires at least a dipeptide for an efficient rate of reaction. N-terminal L-methionine is a prerequisite for activity but the enzyme has broad specificity at other positions. This chain is Peptide deformylase, found in Chlamydia abortus (strain DSM 27085 / S26/3) (Chlamydophila abortus).